The primary structure comprises 168 residues: ATP synthase F(1) complex subunit delta, mitochondrial (168 aa).

The N-terminal 22 residues, M1–Y22, are a transit peptide targeting the mitochondrion. K136 and K165 each carry N6-acetyllysine; alternate. N6-succinyllysine; alternate is present on residues K136 and K165.

The protein belongs to the ATPase epsilon chain family. In terms of assembly, component of the ATP synthase complex composed at least of ATP5F1A/subunit alpha, ATP5F1B/subunit beta, ATP5MC1/subunit c (homooctomer), MT-ATP6/subunit a, MT-ATP8/subunit 8, ATP5ME/subunit e, ATP5MF/subunit f, ATP5MG/subunit g, ATP5MK/subunit k, ATP5MJ/subunit j, ATP5F1C/subunit gamma, ATP5F1D/subunit delta, ATP5F1E/subunit epsilon, ATP5PF/subunit F6, ATP5PB/subunit b, ATP5PD/subunit d, ATP5PO/subunit OSCP. ATP synthase complex consists of a soluble F(1) head domain (subunits alpha(3) and beta(3)) - the catalytic core - and a membrane F(0) domain - the membrane proton channel (subunits c, a, 8, e, f, g, k and j). These two domains are linked by a central stalk (subunits gamma, delta, and epsilon) rotating inside the F1 region and a stationary peripheral stalk (subunits F6, b, d, and OSCP). Component of a complex composed at least by ATPIF1, ATP5F1A, ATP5F1B, ATP5F1C AND ATP5F1E.

It is found in the mitochondrion. The protein resides in the mitochondrion inner membrane. Subunit delta, of the mitochondrial membrane ATP synthase complex (F(1)F(0) ATP synthase or Complex V) that produces ATP from ADP in the presence of a proton gradient across the membrane which is generated by electron transport complexes of the respiratory chain. ATP synthase complex consist of a soluble F(1) head domain - the catalytic core - and a membrane F(1) domain - the membrane proton channel. These two domains are linked by a central stalk rotating inside the F(1) region and a stationary peripheral stalk. During catalysis, ATP synthesis in the catalytic domain of F(1) is coupled via a rotary mechanism of the central stalk subunits to proton translocation. In vivo, can only synthesize ATP although its ATP hydrolase activity can be activated artificially in vitro. With the central stalk subunit gamma, is essential for the biogenesis of F(1) catalytic part of the ATP synthase complex namely in the formation of F1 assembly intermediate. This is ATP synthase F(1) complex subunit delta, mitochondrial from Rattus norvegicus (Rat).